The primary structure comprises 2111 residues: Glutamate synthase [NADH] (2111 aa).

Cys-69 functions as the Nucleophile in the catalytic mechanism. Positions 69–469 (CGVGFTCHIK…PGRMLLVDTK (401 aa)) constitute a Glutamine amidotransferase type-2 domain. The tract at residues 969 to 990 (GGKSNTGEGGEDPARSQRLANG) is disordered. 1139-1191 (VAETHQTLVLNDLRGRVVIQTDGQIRTGRDVAIACLLGAEEWGFATTPLIALG) lines the FMN pocket. 3 residues coordinate [3Fe-4S] cluster: Cys-1192, Cys-1198, and Cys-1203.

The protein belongs to the glutamate synthase family. In terms of assembly, homotrimer. [3Fe-4S] cluster is required as a cofactor. FAD serves as cofactor. Requires FMN as cofactor.

It is found in the cytoplasm. It catalyses the reaction 2 L-glutamate + NAD(+) = L-glutamine + 2-oxoglutarate + NADH + H(+). Its pathway is amino-acid biosynthesis; L-glutamate biosynthesis via GLT pathway; L-glutamate from 2-oxoglutarate and L-glutamine (NAD(+) route): step 1/1. It functions in the pathway energy metabolism; nitrogen metabolism. Its activity is regulated as follows. In the presence of 10 mM allantoin, the activity is reduced more than 25%. In terms of biological role, forms L-glutamate from L-glutamine and 2-oxoglutarate. Represents an alternative pathway to L-glutamate dehydrogenase for the biosynthesis of L-glutamate. Participates with glutamine synthetase in ammonia assimilation processes. The enzyme is specific for NADH, L-glutamine and 2-oxoglutarate. This Schizosaccharomyces pombe (strain 972 / ATCC 24843) (Fission yeast) protein is Glutamate synthase [NADH] (glt1).